A 317-amino-acid chain; its full sequence is tRNA dimethylallyltransferase (317 aa).

14–21 lines the ATP pocket; sequence GPTASGKS. Substrate is bound at residue 16–21; the sequence is TASGKS. Interaction with substrate tRNA stretches follow at residues 39–42 and 163–167; these read DSVL and QRIQR.

The protein belongs to the IPP transferase family. In terms of assembly, monomer. Mg(2+) serves as cofactor.

The catalysed reaction is adenosine(37) in tRNA + dimethylallyl diphosphate = N(6)-dimethylallyladenosine(37) in tRNA + diphosphate. In terms of biological role, catalyzes the transfer of a dimethylallyl group onto the adenine at position 37 in tRNAs that read codons beginning with uridine, leading to the formation of N6-(dimethylallyl)adenosine (i(6)A). The polypeptide is tRNA dimethylallyltransferase (Xylella fastidiosa (strain M23)).